Here is a 322-residue protein sequence, read N- to C-terminus: tRNA-dihydrouridine synthase B (322 aa).

FMN is bound by residues 16-18 (PMA) and Gln-70. Catalysis depends on Cys-100, which acts as the Proton donor. FMN contacts are provided by residues Lys-139, 200 to 202 (NGD), and 224 to 225 (GR).

It belongs to the Dus family. DusB subfamily. FMN is required as a cofactor.

It carries out the reaction a 5,6-dihydrouridine in tRNA + NAD(+) = a uridine in tRNA + NADH + H(+). The catalysed reaction is a 5,6-dihydrouridine in tRNA + NADP(+) = a uridine in tRNA + NADPH + H(+). In terms of biological role, catalyzes the synthesis of 5,6-dihydrouridine (D), a modified base found in the D-loop of most tRNAs, via the reduction of the C5-C6 double bond in target uridines. The protein is tRNA-dihydrouridine synthase B of Shewanella oneidensis (strain ATCC 700550 / JCM 31522 / CIP 106686 / LMG 19005 / NCIMB 14063 / MR-1).